A 1158-amino-acid chain; its full sequence is Phospholipid-transporting ATPase 1 (1158 aa).

Over residues 1–15 (MDPRKSIDKPPHHDP) the composition is skewed to basic and acidic residues. The tract at residues 1–30 (MDPRKSIDKPPHHDPILGVSSRWSVSSKDN) is disordered. Topologically, residues 1 to 100 (MDPRKSIDKP…TAKYSVFTFL (100 aa)) are cytoplasmic. A helical membrane pass occupies residues 101–122 (PRNLFEQFHRVAYIYFLVIAVL). Over 123–127 (NQLPQ) the chain is Extracellular. The helical transmembrane segment at 128-150 (LAVFGRGASIMPLAFVLLVSAIK) threads the bilayer. Topologically, residues 151–329 (DAYEDFRRHR…SRLETRMNLE (179 aa)) are cytoplasmic. The helical transmembrane segment at 330 to 351 (IILLSLFLIVLCTIAAATAAVW) threads the bilayer. Residues 352–391 (LRTHRDDLDTILFYRRKDYSERPGGKNYKYYGWGWEIFFT) are Extracellular-facing. A helical membrane pass occupies residues 392-409 (FFMAVIVYQIMIPISLYI). Over 410–914 (SMELVRIGQA…HGHWNYQRMG (505 aa)) the chain is Cytoplasmic. Residue D457 is the 4-aspartylphosphate intermediate of the active site. The Mg(2+) site is built by D859 and D863. The chain crosses the membrane as a helical span at residues 915–934 (YMILYNFYRNAVFVLILFWY). At 935 to 948 (VLFTCYTLTTAITE) the chain is on the extracellular side. Residues 949–968 (WSSVLYSVIYTAIPTIIIGI) form a helical membrane-spanning segment. The Cytoplasmic segment spans residues 969-998 (LDKDLGRQTLLDHPQLYGVGQRAEGYSTTL). A helical transmembrane segment spans residues 999 to 1020 (FWYTMIDTIWQSAAIFFIPMFA). At 1021 to 1027 (YWGSTID) the chain is on the extracellular side. A helical membrane pass occupies residues 1028–1050 (TSSLGDLWTIAAVVVVNLHLAMD). The Cytoplasmic segment spans residues 1051 to 1056 (VIRWNW). The helical transmembrane segment at 1057–1077 (ITHAAIWGSIVAACICVIVID) threads the bilayer. The Extracellular segment spans residues 1078 to 1090 (VIPTLPGYWAIFQ). The helical transmembrane segment at 1091-1115 (VGKTWMFWFCLLAIVVTSLLPRFAI) threads the bilayer. Residues 1116-1158 (KFLVEYYRPSDVRIAREAEKLGTFRESQPVGVEMNLIQDPPRR) are Cytoplasmic-facing.

This sequence belongs to the cation transport ATPase (P-type) (TC 3.A.3) family. Type IV subfamily. In terms of tissue distribution, expressed in roots, flowers, anthers, leaves, vascular tissues and stems.

It is found in the endoplasmic reticulum membrane. The protein localises to the cell membrane. It catalyses the reaction ATP + H2O + phospholipidSide 1 = ADP + phosphate + phospholipidSide 2.. Functionally, involved in transport of phospholipids. Contributes to transmembrane flipping of lipids. Has activity with phosphatidylserine and with a much lower efficiency with phosphatidylethanolamine, but not with phosphatidylcholine. In Arabidopsis thaliana (Mouse-ear cress), this protein is Phospholipid-transporting ATPase 1.